Consider the following 77-residue polypeptide: UPF0349 protein lwe2340 (77 aa).

Belongs to the UPF0349 family.

This chain is UPF0349 protein lwe2340, found in Listeria welshimeri serovar 6b (strain ATCC 35897 / DSM 20650 / CCUG 15529 / CIP 8149 / NCTC 11857 / SLCC 5334 / V8).